The sequence spans 420 residues: UDP-N-acetylglucosamine 1-carboxyvinyltransferase (420 aa).

22 to 23 (KN) lines the phosphoenolpyruvate pocket. Arg-91 lines the UDP-N-acetyl-alpha-D-glucosamine pocket. Residue Cys-115 is the Proton donor of the active site. Cys-115 bears the 2-(S-cysteinyl)pyruvic acid O-phosphothioketal mark. UDP-N-acetyl-alpha-D-glucosamine contacts are provided by residues 120–124 (RPVDL), 160–163 (KVSV), Asp-305, and Ile-327.

The protein belongs to the EPSP synthase family. MurA subfamily.

It localises to the cytoplasm. It carries out the reaction phosphoenolpyruvate + UDP-N-acetyl-alpha-D-glucosamine = UDP-N-acetyl-3-O-(1-carboxyvinyl)-alpha-D-glucosamine + phosphate. The protein operates within cell wall biogenesis; peptidoglycan biosynthesis. Its function is as follows. Cell wall formation. Adds enolpyruvyl to UDP-N-acetylglucosamine. In Pectobacterium atrosepticum (strain SCRI 1043 / ATCC BAA-672) (Erwinia carotovora subsp. atroseptica), this protein is UDP-N-acetylglucosamine 1-carboxyvinyltransferase.